The sequence spans 201 residues: 3-isopropylmalate dehydratase small subunit (201 aa).

This sequence belongs to the LeuD family. LeuD type 1 subfamily. Heterodimer of LeuC and LeuD.

It carries out the reaction (2R,3S)-3-isopropylmalate = (2S)-2-isopropylmalate. It functions in the pathway amino-acid biosynthesis; L-leucine biosynthesis; L-leucine from 3-methyl-2-oxobutanoate: step 2/4. Its function is as follows. Catalyzes the isomerization between 2-isopropylmalate and 3-isopropylmalate, via the formation of 2-isopropylmaleate. This is 3-isopropylmalate dehydratase small subunit from Rhodopseudomonas palustris (strain BisA53).